The following is an 853-amino-acid chain: MSAIENFDAHTPMMQQYLKLKAQHPEILLFYRMGDFYELFYDDAKRASQLLDISLTKRGASAGEPIPMAGIPYHAVENYLAKLVNQGESVAICEQIGDPATSKGPVERKVVRIVTPGTISDEALLQERQDNLLAAIWQDSKGFGYATLDISSGRFRLSEPADRETMAAELQRTNPAELLYAEDFAEMSLIEGRRGLRRRPLWEFEIDTARQQLNLQFGTRDLVGFGVENAPRGLCAAGCLLQYAKDTQRTTLPHIRSITMEREQDSIIMDAATRRNLEITQNLAGGAENTLASVLDCTVTPMGSRMLKRWLHMPVRDTRVLLERQQTIGALQDFTAELQPVLRQVGDLERILARLALRTARPRDLARMRHAFQQLPELRALLENVDSAPVQALREKMGEFAELRDLLERAIIDTPPVLVRDGGVIAPGYNEELDEWRALADGATDYLERLEVRERERTGLDTLKVGFNAVHGYYIQISRGQSHLAPINYMRRQTLKNAERYIIPELKEYEDKVLTSKGKALALEKQLYEELFDLLLPHLEALQQSASALAELDVLVNLAERAYTLNYTCPTFIDKPGIRITEGRHPVVEQVLNEPFIANPLNLSPQRRMLIITGPNMGGKSTYMRQTALIALMAYIGSYVPAQKVEIGPIDRIFTRVGAADDLASGRSTFMVEMTETANILHNATEYSLVLMDEIGRGTSTYDGLSLAWACAENLANKIKALTLFATHYFELTQLPEKMEGVANVHLDALEHGDTIAFMHSVQDGAASKSYGLAVAALAGVPKEVIKRARQKLRELESISPNAAATQVDGTQMSLLSVQEETSPAVEALENLDPDSLTPRQALEWIYRLKSLV.

614-621 (GPNMGGKS) is a binding site for ATP.

The protein belongs to the DNA mismatch repair MutS family.

Its function is as follows. This protein is involved in the repair of mismatches in DNA. It is possible that it carries out the mismatch recognition step. This protein has a weak ATPase activity. The chain is DNA mismatch repair protein MutS from Escherichia coli O7:K1 (strain IAI39 / ExPEC).